The primary structure comprises 420 residues: Ribosome biogenesis protein WDR12 homolog (420 aa).

Positions 10 to 92 are ubiquitin-like (UBL) domain; sequence VQVHLKTKQE…EDAIEIEYVE (83 aa). WD repeat units follow at residues 104–142, 143–185, 192–231, 250–288, 290–329, 335–375, and 379–417; these read LHDDWVSAVKARGKWILSGCYDNSLNLWTNKGKHILTIS, GHTA…NAVD, GHERGVDSVSVSPDGLRFATGSWDTMLKVWSAELDDGVEG, GHRESVSAVQWMDATTLLTGSWDYTLKVWDLSLEGIKTE, STNKSIFDASYSKLNRLILTASADKNLRLYDPRTNQGSVV, GHNA…APLY, and GHGDKVLDIDWSNPKYIVSGGVDNSVRVFKSRKALAEDT.

It belongs to the WD repeat WDR12/YTM1 family.

It localises to the nucleus. It is found in the nucleolus. The protein localises to the nucleoplasm. Its function is as follows. Required for maturation of ribosomal RNAs and formation of the large ribosomal subunit. The sequence is that of Ribosome biogenesis protein WDR12 homolog from Drosophila simulans (Fruit fly).